The following is a 273-amino-acid chain: Protein FAM216A (273 aa).

Residues 1 to 47 form a disordered region; it reads MLGQLLPHTARGLGAAEMPGQGPGSDWTERSSSAEPPAVAGTEGGGG.

This sequence belongs to the FAM216 family.

This is Protein FAM216A (FAM216A) from Homo sapiens (Human).